Here is an 831-residue protein sequence, read N- to C-terminus: Periplasmic nitrate reductase (831 aa).

Residues 1 to 31 (MKLSRRDFMKANAAVAAAAAAGLTIPTVAKA) constitute a signal peptide (tat-type signal). Positions 40–96 (IKWDKAPCRFCGTGCGVLVGTQNGRIVASQGDPDSPVNRGLNCVKGYFLPKIMYGKD) constitute a 4Fe-4S Mo/W bis-MGD-type domain. [4Fe-4S] cluster is bound by residues cysteine 47, cysteine 50, cysteine 54, and cysteine 82. Residues lysine 84, glutamine 151, asparagine 176, cysteine 180, 213-220 (WGSNMAEM), 244-248 (STFEH), 263-265 (QTD), methionine 373, glutamine 377, asparagine 483, 509-510 (SD), lysine 532, aspartate 559, and 719-728 (TGRVLEHWHT) contribute to the Mo-bis(molybdopterin guanine dinucleotide) site. Phenylalanine 795 provides a ligand contact to substrate. Residues asparagine 803 and lysine 820 each coordinate Mo-bis(molybdopterin guanine dinucleotide).

This sequence belongs to the prokaryotic molybdopterin-containing oxidoreductase family. NasA/NapA/NarB subfamily. In terms of assembly, component of the periplasmic nitrate reductase NapAB complex composed of NapA and NapB. The cofactor is [4Fe-4S] cluster. Mo-bis(molybdopterin guanine dinucleotide) is required as a cofactor. Predicted to be exported by the Tat system. The position of the signal peptide cleavage has not been experimentally proven.

It localises to the periplasm. The catalysed reaction is 2 Fe(II)-[cytochrome] + nitrate + 2 H(+) = 2 Fe(III)-[cytochrome] + nitrite + H2O. Functionally, catalytic subunit of the periplasmic nitrate reductase complex NapAB. Receives electrons from NapB and catalyzes the reduction of nitrate to nitrite. This chain is Periplasmic nitrate reductase, found in Yersinia enterocolitica serotype O:8 / biotype 1B (strain NCTC 13174 / 8081).